A 113-amino-acid chain; its full sequence is MHELSLCMSAADIIREQAEQHGIARVTDVWLEVGALADVEESALHFCFDIACRDTVAQGCTLHIDVIPAQAWCWDCSREAEIMQHAGCCPHCGSERLRITEGDDLRVKSLEGE.

2 residues coordinate Ni(2+): His2 and Glu3. Positions 73, 76, 89, and 92 each coordinate Zn(2+).

This sequence belongs to the HypA/HybF family. HybF subfamily.

Involved in the maturation of [NiFe] hydrogenases. Required for nickel insertion into the metal center of the hydrogenase. The polypeptide is Hydrogenase maturation factor HybF (Klebsiella pneumoniae).